The following is a 1555-amino-acid chain: Glycogen debranching enzyme (1555 aa).

Position 87 is a phosphoserine (S87). Residues D549, H552, and D650 contribute to the active site.

It belongs to the glycogen debranching enzyme family. As to quaternary structure, monomer. Interacts with NHLRC1/malin. Post-translationally, the N-terminus is blocked. In terms of processing, ubiquitinated.

The protein localises to the cytoplasm. It catalyses the reaction Transfers a segment of a (1-&gt;4)-alpha-D-glucan to a new position in an acceptor, which may be glucose or a (1-&gt;4)-alpha-D-glucan.. The enzyme catalyses Hydrolysis of (1-&gt;6)-alpha-D-glucosidic branch linkages in glycogen phosphorylase limit dextrin.. Functionally, multifunctional enzyme acting as 1,4-alpha-D-glucan:1,4-alpha-D-glucan 4-alpha-D-glycosyltransferase and amylo-1,6-glucosidase in glycogen degradation. The chain is Glycogen debranching enzyme (AGL) from Oryctolagus cuniculus (Rabbit).